We begin with the raw amino-acid sequence, 207 residues long: MTGHVRPFVIGVAGGSGSGKTTVTRRVIETVGGNGVSVLNQDNYYRDQSDIPFNARLNTNYDHPAAFDWPLLRSHLDALLSGVPIDMPEYDFTQHTRSAQASTVLPGAVVVLEGFFALYDEELRERMHLKVFVDADADVRFIRRLLRDTQERGRTPESVIQQYLEYVRPMHLSFVEPTKRYADVIIPHGGMNEPALDMLSARIRTTI.

ATP is bound at residue 14–21 (GGSGSGKT).

This sequence belongs to the uridine kinase family.

It localises to the cytoplasm. It catalyses the reaction uridine + ATP = UMP + ADP + H(+). The catalysed reaction is cytidine + ATP = CMP + ADP + H(+). The protein operates within pyrimidine metabolism; CTP biosynthesis via salvage pathway; CTP from cytidine: step 1/3. Its pathway is pyrimidine metabolism; UMP biosynthesis via salvage pathway; UMP from uridine: step 1/1. This chain is Uridine kinase, found in Deinococcus deserti (strain DSM 17065 / CIP 109153 / LMG 22923 / VCD115).